The chain runs to 226 residues: dTTP/UTP pyrophosphatase (226 aa).

The active-site Proton acceptor is the aspartate 85.

It belongs to the Maf family. YhdE subfamily. A divalent metal cation serves as cofactor.

Its subcellular location is the cytoplasm. The catalysed reaction is dTTP + H2O = dTMP + diphosphate + H(+). It carries out the reaction UTP + H2O = UMP + diphosphate + H(+). In terms of biological role, nucleoside triphosphate pyrophosphatase that hydrolyzes dTTP and UTP. May have a dual role in cell division arrest and in preventing the incorporation of modified nucleotides into cellular nucleic acids. The chain is dTTP/UTP pyrophosphatase from Psychrobacter cryohalolentis (strain ATCC BAA-1226 / DSM 17306 / VKM B-2378 / K5).